Reading from the N-terminus, the 455-residue chain is Ribulose bisphosphate carboxylase large chain (455 aa).

N6,N6,N6-trimethyllysine is present on Lys-5. Positions 114 and 164 each coordinate substrate. The Proton acceptor role is filled by Lys-166. Residue Lys-168 participates in substrate binding. Lys-192, Asp-194, and Glu-195 together coordinate Mg(2+). Lys-192 carries the post-translational modification N6-carboxylysine. The active-site Proton acceptor is His-285. Substrate contacts are provided by Arg-286, His-318, and Ser-370.

This sequence belongs to the RuBisCO large chain family. Type I subfamily. As to quaternary structure, heterohexadecamer of 8 large chains and 8 small chains; disulfide-linked. The disulfide link is formed within the large subunit homodimers. It depends on Mg(2+) as a cofactor. In terms of processing, the disulfide bond which can form in the large chain dimeric partners within the hexadecamer appears to be associated with oxidative stress and protein turnover.

Its subcellular location is the plastid. The protein resides in the chloroplast. It catalyses the reaction 2 (2R)-3-phosphoglycerate + 2 H(+) = D-ribulose 1,5-bisphosphate + CO2 + H2O. The enzyme catalyses D-ribulose 1,5-bisphosphate + O2 = 2-phosphoglycolate + (2R)-3-phosphoglycerate + 2 H(+). Its function is as follows. RuBisCO catalyzes two reactions: the carboxylation of D-ribulose 1,5-bisphosphate, the primary event in carbon dioxide fixation, as well as the oxidative fragmentation of the pentose substrate in the photorespiration process. Both reactions occur simultaneously and in competition at the same active site. The chain is Ribulose bisphosphate carboxylase large chain from Lupinus nanus (Sky lupine).